We begin with the raw amino-acid sequence, 267 residues long: 3-methyl-2-oxobutanoate hydroxymethyltransferase (267 aa).

Residues aspartate 46 and aspartate 85 each contribute to the Mg(2+) site. 3-methyl-2-oxobutanoate-binding positions include 46 to 47 (DS), aspartate 85, and lysine 115. Residue glutamate 117 participates in Mg(2+) binding. Residue glutamate 184 is the Proton acceptor of the active site.

The protein belongs to the PanB family. In terms of assembly, homodecamer; pentamer of dimers. The cofactor is Mg(2+).

The protein resides in the cytoplasm. It catalyses the reaction 3-methyl-2-oxobutanoate + (6R)-5,10-methylene-5,6,7,8-tetrahydrofolate + H2O = 2-dehydropantoate + (6S)-5,6,7,8-tetrahydrofolate. It participates in cofactor biosynthesis; (R)-pantothenate biosynthesis; (R)-pantoate from 3-methyl-2-oxobutanoate: step 1/2. Catalyzes the reversible reaction in which hydroxymethyl group from 5,10-methylenetetrahydrofolate is transferred onto alpha-ketoisovalerate to form ketopantoate. This is 3-methyl-2-oxobutanoate hydroxymethyltransferase from Syntrophotalea carbinolica (strain DSM 2380 / NBRC 103641 / GraBd1) (Pelobacter carbinolicus).